The following is a 27-amino-acid chain: Toxin TdII-4 (27 aa).

An LCN-type CS-alpha/beta domain is found at 1–27 (KDGYLMEPNGCKLGCLTRPAKYCWXEE).

It belongs to the long (4 C-C) scorpion toxin superfamily. Sodium channel inhibitor family. Beta subfamily. Expressed by the venom gland.

It localises to the secreted. Beta toxins bind voltage-independently at site-4 of sodium channels (Nav) and shift the voltage of activation toward more negative potentials thereby affecting sodium channel activation and promoting spontaneous and repetitive firing. This toxin is active against mammals and also affects neuromuscular preparations of frog. The protein is Toxin TdII-4 of Tityus discrepans (Venezuelan scorpion).